A 356-amino-acid chain; its full sequence is Metacaspase-1 (356 aa).

The interval 1-47 (MYSGRSGAPPPAHSPYPNSYNHGPPGHSAGHNVPPPPPTQPVQFGHG) is disordered. Catalysis depends on residues His147 and Cys203.

This sequence belongs to the peptidase C14B family.

Its function is as follows. Involved in cell death (apoptosis). The polypeptide is Metacaspase-1 (MCA1) (Ajellomyces capsulatus (strain NAm1 / WU24) (Darling's disease fungus)).